Reading from the N-terminus, the 151-residue chain is Aspartate carbamoyltransferase regulatory chain (151 aa).

Zn(2+) is bound by residues Cys108, Cys113, Cys138, and Cys141.

The protein belongs to the PyrI family. In terms of assembly, contains catalytic and regulatory chains. It depends on Zn(2+) as a cofactor.

Its function is as follows. Involved in allosteric regulation of aspartate carbamoyltransferase. This chain is Aspartate carbamoyltransferase regulatory chain, found in Pyrobaculum arsenaticum (strain DSM 13514 / JCM 11321 / PZ6).